The chain runs to 53 residues: Bowman-Birk type proteinase inhibitor 1 (53 aa).

Cystine bridges form between cysteine 9/cysteine 24, cysteine 12/cysteine 51, cysteine 14/cysteine 22, cysteine 31/cysteine 38, and cysteine 40/cysteine 48.

In terms of assembly, dimer.

Its function is as follows. Inhibits trypsin (IC(50)=6.20 nM), neutrophil elastase (ELANE) and, to a lesser extent, alpha-chymotrypsin (IC(50)=3.44 uM). This is Bowman-Birk type proteinase inhibitor 1 from Lathyrus sativus (White vetchling).